A 152-amino-acid polypeptide reads, in one-letter code: Endoribonuclease YbeY (152 aa).

Zn(2+)-binding residues include H113, H117, and H123.

It belongs to the endoribonuclease YbeY family. Zn(2+) serves as cofactor.

Its subcellular location is the cytoplasm. Its function is as follows. Single strand-specific metallo-endoribonuclease involved in late-stage 70S ribosome quality control and in maturation of the 3' terminus of the 16S rRNA. In Delftia acidovorans (strain DSM 14801 / SPH-1), this protein is Endoribonuclease YbeY.